We begin with the raw amino-acid sequence, 245 residues long: 5-oxoprolinase subunit A (245 aa).

This sequence belongs to the LamB/PxpA family. As to quaternary structure, forms a complex composed of PxpA, PxpB and PxpC.

The enzyme catalyses 5-oxo-L-proline + ATP + 2 H2O = L-glutamate + ADP + phosphate + H(+). Functionally, catalyzes the cleavage of 5-oxoproline to form L-glutamate coupled to the hydrolysis of ATP to ADP and inorganic phosphate. The sequence is that of 5-oxoprolinase subunit A from Erwinia tasmaniensis (strain DSM 17950 / CFBP 7177 / CIP 109463 / NCPPB 4357 / Et1/99).